The chain runs to 212 residues: MNEPQLLIETWGQPGEIIDGVPMLESHDGKDLGLKPGLYIEGIFMQAEVVNRNKRLYPKRILEKAVKDYINEQVLTKQALGELNHPPRANVDPMQAAIIIEDMWWKGNDVYGRARVIEGDHGPGDKLAANIRAGWIPGVSSRGLGSLTDTNEGYRIVNEGFKLTVGVDAVWGPSAPDAWVTPKEITESQTAEADTSADDAYMALAEAMKKAL.

His-85 is an active-site residue. The interval 117–136 (IEGDHGPGDKLAANIRAGWI) is homomultimerization. Residue Ser-140 is part of the active site. A propeptide spanning residues 207 to 212 (AMKKAL) is cleaved from the precursor.

It belongs to the peptidase U9 family. Homopentamer. The self-cleavage of the N-terminus allows the activation of the protease. Probably also self-cleaved at the C-terminus in order to detach the protease from the scaffold protein and allow it to diffuse within the prohead to cleave the prohead proteins. After cleavage of the inner core of the prohead, the gp21 protease also destroys itself into small cleavage products.

Its function is as follows. Serine protease ot the inner core, which is activated by autocatalytic cleavage after completion of prohead assembly and processes many prohead proteins. These cleaved peptides from the inner core and the auto-cleaved protease escape from the capsid, thus liberating space for the phage DNA genome. Cleaves the prohead proteins after the sequence motif L/I-X-E. This Escherichia coli (Bacteriophage T4) protein is Prohead core protein protease (21).